Consider the following 371-residue polypeptide: 4-hydroxy-3-methylbut-2-en-1-yl diphosphate synthase (flavodoxin) (371 aa).

[4Fe-4S] cluster is bound by residues Cys-268, Cys-271, Cys-303, and Glu-310.

The protein belongs to the IspG family. Requires [4Fe-4S] cluster as cofactor.

The catalysed reaction is (2E)-4-hydroxy-3-methylbut-2-enyl diphosphate + oxidized [flavodoxin] + H2O + 2 H(+) = 2-C-methyl-D-erythritol 2,4-cyclic diphosphate + reduced [flavodoxin]. Its pathway is isoprenoid biosynthesis; isopentenyl diphosphate biosynthesis via DXP pathway; isopentenyl diphosphate from 1-deoxy-D-xylulose 5-phosphate: step 5/6. Its function is as follows. Converts 2C-methyl-D-erythritol 2,4-cyclodiphosphate (ME-2,4cPP) into 1-hydroxy-2-methyl-2-(E)-butenyl 4-diphosphate. The protein is 4-hydroxy-3-methylbut-2-en-1-yl diphosphate synthase (flavodoxin) of Lysinibacillus sphaericus (strain C3-41).